The following is a 169-amino-acid chain: Small ribosomal subunit protein uS5 (169 aa).

An S5 DRBM domain is found at 13–76 (LVEKLVSVRR…EKARRNMKDV (64 aa)).

Belongs to the universal ribosomal protein uS5 family. As to quaternary structure, part of the 30S ribosomal subunit. Contacts proteins S4 and S8.

In terms of biological role, with S4 and S12 plays an important role in translational accuracy. Functionally, located at the back of the 30S subunit body where it stabilizes the conformation of the head with respect to the body. This is Small ribosomal subunit protein uS5 from Hydrogenovibrio crunogenus (strain DSM 25203 / XCL-2) (Thiomicrospira crunogena).